The sequence spans 384 residues: DNA replication and repair protein RecF (384 aa).

An ATP-binding site is contributed by 43 to 50 (GENGSGKT).

The protein belongs to the RecF family.

It is found in the cytoplasm. In terms of biological role, the RecF protein is involved in DNA metabolism; it is required for DNA replication and normal SOS inducibility. RecF binds preferentially to single-stranded, linear DNA. It also seems to bind ATP. This chain is DNA replication and repair protein RecF, found in Brucella suis biovar 1 (strain 1330).